We begin with the raw amino-acid sequence, 356 residues long: MTERRIIHIDMDYFFAQVEMRDNPKLKGKPVIVGGKASHRGVVSTASYEARAYGVHSAMPMTQAHKLCPNGYYVTSRFDTYREVSGQIMKIFRSYTELVEPMSLDEAYLDITHLVRPDLPASTIANYIRRDIYEVTRLTASAGVSYNKFLAKLASGMNKPNGLTVIDYNNVHEILMQLDIGDFPGVGKASKKKMHQHHIYTGQDLYNKDEFELIRLFGKRGRGLYNKARGIDHNEVKASRVRKSVGTERTFSTDVNDDDVILRKIRELSGKTAERLNKIQKSGKTVTVKIKTYQYETISKQKSLRDPIRTETDIYNIAYTLYNDLKDPEIPIRLIGVTVGSLEQSDFKNLTIYDFI.

Residues I6–G187 form the UmuC domain. Residues D10 and D105 each contribute to the Mg(2+) site. E106 is an active-site residue.

Belongs to the DNA polymerase type-Y family. Monomer. It depends on Mg(2+) as a cofactor.

It localises to the cytoplasm. The catalysed reaction is DNA(n) + a 2'-deoxyribonucleoside 5'-triphosphate = DNA(n+1) + diphosphate. Functionally, poorly processive, error-prone DNA polymerase involved in untargeted mutagenesis. Copies undamaged DNA at stalled replication forks, which arise in vivo from mismatched or misaligned primer ends. These misaligned primers can be extended by PolIV. Exhibits no 3'-5' exonuclease (proofreading) activity. May be involved in translesional synthesis, in conjunction with the beta clamp from PolIII. The chain is DNA polymerase IV from Staphylococcus epidermidis (strain ATCC 12228 / FDA PCI 1200).